A 443-amino-acid chain; its full sequence is Ribosomal protein uS12 methylthiotransferase RimO (443 aa).

An MTTase N-terminal domain is found at 9-119; that stretch reads PKIGMVSLGC…VVSAVHDAAP (111 aa). 6 residues coordinate [4Fe-4S] cluster: Cys18, Cys54, Cys83, Cys150, Cys154, and Cys157. The 238-residue stretch at 136-373 folds into the Radical SAM core domain; sequence LTPRHYSYLK…MEKAAQISEA (238 aa). The 68-residue stretch at 376–443 folds into the TRAM domain; the sequence is QAKIGRDIAT…EHDLFGVALS (68 aa).

The protein belongs to the methylthiotransferase family. RimO subfamily. It depends on [4Fe-4S] cluster as a cofactor.

The protein resides in the cytoplasm. The enzyme catalyses L-aspartate(89)-[ribosomal protein uS12]-hydrogen + (sulfur carrier)-SH + AH2 + 2 S-adenosyl-L-methionine = 3-methylsulfanyl-L-aspartate(89)-[ribosomal protein uS12]-hydrogen + (sulfur carrier)-H + 5'-deoxyadenosine + L-methionine + A + S-adenosyl-L-homocysteine + 2 H(+). Catalyzes the methylthiolation of an aspartic acid residue of ribosomal protein uS12. This chain is Ribosomal protein uS12 methylthiotransferase RimO, found in Zymomonas mobilis subsp. mobilis (strain ATCC 31821 / ZM4 / CP4).